Consider the following 358-residue polypeptide: UDP-3-O-acylglucosamine N-acyltransferase (358 aa).

His-248 serves as the catalytic Proton acceptor.

The protein belongs to the transferase hexapeptide repeat family. LpxD subfamily. In terms of assembly, homotrimer.

It carries out the reaction a UDP-3-O-[(3R)-3-hydroxyacyl]-alpha-D-glucosamine + a (3R)-hydroxyacyl-[ACP] = a UDP-2-N,3-O-bis[(3R)-3-hydroxyacyl]-alpha-D-glucosamine + holo-[ACP] + H(+). The protein operates within bacterial outer membrane biogenesis; LPS lipid A biosynthesis. Functionally, catalyzes the N-acylation of UDP-3-O-acylglucosamine using 3-hydroxyacyl-ACP as the acyl donor. Is involved in the biosynthesis of lipid A, a phosphorylated glycolipid that anchors the lipopolysaccharide to the outer membrane of the cell. The chain is UDP-3-O-acylglucosamine N-acyltransferase from Synechococcus sp. (strain WH7803).